Reading from the N-terminus, the 296-residue chain is Aldo-keto reductase MYCFIDRAFT_156381 (296 aa).

NADP(+) is bound at residue Asp-14. Tyr-19 serves as the catalytic Proton donor. His-83 contacts substrate. Residues 113-114 (CN), Gln-139, 168-178 (SPLAGGMLTDR), and Arg-191 contribute to the NADP(+) site. Tyr-201 provides a ligand contact to substrate. 255–263 (SSAEQLESN) contacts NADP(+).

Belongs to the aldo/keto reductase family. Aldo/keto reductase 2 subfamily.

It functions in the pathway secondary metabolite biosynthesis. Functionally, aldo-keto reductase; part of the gene cluster that mediates the biosynthesis of an emodin derivative that may be involved in black Sigatoka disease of banana. The pathway begins with the synthesis of atrochrysone thioester by the polyketide synthase PKS8-1. The atrochrysone carboxyl ACP thioesterase MYCFIDRAFT_190111 then breaks the thioester bond and releases the atrochrysone carboxylic acid from PKS8-1. The decarboxylase MYCFIDRAFT_34057 then catalyzes the concerted decarboxylation-elimination required to convert atochrysone carboxylic acid into emodin anthrone, which is further oxidized to emodin by the anthrone oxygenase MYCFIDRAFT_34418. The functions of the other tailoring enzymes as well as the final product of the cluster have still to be identified. The chain is Aldo-keto reductase MYCFIDRAFT_156381 from Pseudocercospora fijiensis (strain CIRAD86) (Black leaf streak disease fungus).